Consider the following 148-residue polypeptide: ATP synthase epsilon chain (148 aa).

This sequence belongs to the ATPase epsilon chain family. In terms of assembly, F-type ATPases have 2 components, CF(1) - the catalytic core - and CF(0) - the membrane proton channel. CF(1) has five subunits: alpha(3), beta(3), gamma(1), delta(1), epsilon(1). CF(0) has three main subunits: a, b and c.

The protein resides in the cell membrane. Its function is as follows. Produces ATP from ADP in the presence of a proton gradient across the membrane. This Streptococcus thermophilus (strain ATCC BAA-250 / LMG 18311) protein is ATP synthase epsilon chain.